We begin with the raw amino-acid sequence, 262 residues long: Glutamate racemase (262 aa).

Substrate contacts are provided by residues 5 to 6 and 37 to 38; these read DS and YG. The Proton donor/acceptor role is filled by Cys69. 70–71 lines the substrate pocket; the sequence is NT. The active-site Proton donor/acceptor is Cys181. 182-183 lines the substrate pocket; sequence TH.

It belongs to the aspartate/glutamate racemases family.

It catalyses the reaction L-glutamate = D-glutamate. It participates in cell wall biogenesis; peptidoglycan biosynthesis. In terms of biological role, provides the (R)-glutamate required for cell wall biosynthesis. The sequence is that of Glutamate racemase from Buchnera aphidicola subsp. Acyrthosiphon pisum (strain Tuc7).